The chain runs to 374 residues: Tomoregulin-2 (374 aa).

The signal sequence occupies residues 1 to 39 (MVLWESPRQCSSWTLCEGFCWLLLLPVMLLIVARPVKLA). Residues 40 to 320 (AFPTSLSDCQ…VPGPVRFQYV (281 aa)) lie on the Extracellular side of the membrane. N-linked (GlcNAc...) asparagine glycosylation is present at asparagine 55. 2 consecutive Kazal-like domains span residues 90–137 (VCQF…SCAT) and 181–229 (VCNI…RCQD). Intrachain disulfides connect cysteine 91/cysteine 121, cysteine 95/cysteine 114, cysteine 103/cysteine 135, cysteine 182/cysteine 213, cysteine 186/cysteine 206, cysteine 195/cysteine 227, cysteine 265/cysteine 278, cysteine 273/cysteine 289, and cysteine 291/cysteine 300. Positions 261-301 (HHIPCPEHYNGFCMHGKCEHSINMQEPSCRCDAGYTGQHCE) constitute an EGF-like domain. Positions 303–320 (KDYSVLYVVPGPVRFQYV) are required for shedding. Residues 321-341 (LIAAVIGTIQIAVICVVVLCI) traverse the membrane as a helical segment. Residues 342 to 374 (TRKCPRSNRIHRQKQNTGHYSSDNTTRASTRLI) are Cytoplasmic-facing. The segment at 353 to 374 (RQKQNTGHYSSDNTTRASTRLI) is disordered. Residues 356-374 (QNTGHYSSDNTTRASTRLI) are compositionally biased toward polar residues.

It belongs to the tomoregulin family. Post-translationally, O-glycosylated; contains chondroitin sulfate glycosaminoglycans. A soluble form (TMEFF2-ECD) is produced by proteolytic shedding. This shedding can be induced by phorbol ester or pro-inflammatory cytokines such as TNFalpha, and is mediated by a metalloproteinase ADAM.

It is found in the membrane. Its function is as follows. May be a survival factor for hippocampal and mesencephalic neurons. The shedded form may up-regulate cell proliferation. In Bos taurus (Bovine), this protein is Tomoregulin-2 (TMEFF2).